We begin with the raw amino-acid sequence, 135 residues long: Helix-loop-helix protein 2 (135 aa).

The disordered stretch occupies residues 1-80 (MMLSPDQAAD…RRRATAKYRS (80 aa)). Residues 10 to 21 (DSDHPSSAHSDP) show a composition bias toward basic and acidic residues. Residues 68-80 (KRRRRRATAKYRS) are compositionally biased toward basic residues. The region spanning 77-129 (KYRSAHATRERIRVEAFNLAFAELRKLLPTLPPDKKLSKIEILRLAICYISYL) is the bHLH domain.

Homodimer. Interacts and may form heterodimers with STAT3.

The protein localises to the nucleus. Functionally, transcription factor which binds the E box motif 5'-CA[TC][AG]TG-3'. Involved in regulating energy expenditure, body mass, voluntary physical activity, mating behavior and reproductive longevity, acting through the hypothalamic-pituitary-gonadal axis. Acts as a transcriptional activator of target genes, including NDN, PCSK1, MC4R. Is also a transcriptional activator of KISS1. May act centrally to regulate function of both white and brown adipose tissue. Together with NHLH1, required to maintain migration and survival of cells in the anterior extramural migration stream (aes), which forms the precerebellar nuclei. Also, in concert with NHLH1, may determine fate of gonadotropin releasing hormone-1 (GnRH-1) neurons. This is Helix-loop-helix protein 2 (NHLH2) from Homo sapiens (Human).